The chain runs to 173 residues: Bifunctional protein PyrR (173 aa).

Residues 93–105 (VILVDDVLYTGRT) carry the PRPP-binding motif.

Belongs to the purine/pyrimidine phosphoribosyltransferase family. PyrR subfamily. Homodimer and homohexamer; in equilibrium.

It catalyses the reaction UMP + diphosphate = 5-phospho-alpha-D-ribose 1-diphosphate + uracil. Its function is as follows. Regulates transcriptional attenuation of the pyrimidine nucleotide (pyr) operon by binding in a uridine-dependent manner to specific sites on pyr mRNA. This disrupts an antiterminator hairpin in the RNA and favors formation of a downstream transcription terminator, leading to a reduced expression of downstream genes. In terms of biological role, also displays a weak uracil phosphoribosyltransferase activity which is not physiologically significant. This Streptococcus thermophilus (strain ATCC BAA-491 / LMD-9) protein is Bifunctional protein PyrR.